Reading from the N-terminus, the 190-residue chain is dCTP deaminase, dUMP-forming (190 aa).

DCTP-binding positions include 101 to 106 (KSSLGR), aspartate 119, 127 to 129 (TLE), glutamine 148, tyrosine 162, lysine 170, and glutamine 174. Glutamate 129 serves as the catalytic Proton donor/acceptor. A disordered region spans residues 160–190 (HPYGSSRAGSKYQGQRGPTPSRSYQNFIRST). Polar residues predominate over residues 171 to 190 (YQGQRGPTPSRSYQNFIRST).

The protein belongs to the dCTP deaminase family. As to quaternary structure, homotrimer.

The catalysed reaction is dCTP + 2 H2O = dUMP + NH4(+) + diphosphate. Its pathway is pyrimidine metabolism; dUMP biosynthesis; dUMP from dCTP: step 1/1. Bifunctional enzyme that catalyzes both the deamination of dCTP to dUTP and the hydrolysis of dUTP to dUMP without releasing the toxic dUTP intermediate. The sequence is that of dCTP deaminase, dUMP-forming from Mycobacterium tuberculosis (strain ATCC 25177 / H37Ra).